A 993-amino-acid polypeptide reads, in one-letter code: Desmoglein-3 (993 aa).

A signal peptide spans Met1–Gly23. A propeptide spanning residues Glu24–Arg49 is cleaved from the precursor. Cadherin domains are found at residues Glu50–Phe157, Ser158–Leu267, Arg268–Lys388, and Arg384–Val495. Residues Glu50–Pro617 lie on the Extracellular side of the membrane. 2 N-linked (GlcNAc...) asparagine glycosylation sites follow: Asn110 and Asn180. Residues Asn459 and Asn546 are each glycosylated (N-linked (GlcNAc...) asparagine). The chain crosses the membrane as a helical span at residues Ala618–Leu638. At Thr639–Leu993 the chain is on the cytoplasmic side. A required for interaction with CTNND1 and localization at cell-cell junctions region spans residues Asp641–Glu714. The segment at Ala845–Tyr876 is disordered. Desmoglein repeat repeat units follow at residues Met905–Glu930 and Thr931–Ile961.

Homodimer. Part of a complex that contains DSG3, PKP1, YAP1 and YWHAG; the complex is required for localization of DSG3 and YAP1 to the cell membrane in keratinocytes. Interacts with PKP2. Interacts with CTNND1; the interaction facilitates DSG3 localization and retention at cell-cell junctions. Interacts with CDH1; the interaction is required for CDH1 localization to developing adherens junctions. Interacts with RAC1; the interaction is required for DSG3 translocation to cell-cell junctions, organization of cortical F-actin bundles and actin anchoring at cell-cell junctions. Interacts with DSC3; the interaction may limit the interaction of DSC3 with p38MAPK family members and therefore repress p38MAPK signaling activation. As to expression, expressed in the basal layer of the outer root sheath of the telogen hair club, specifically at the cell membrane between the apex of the cells and the surrounding hair club (at protein level). Expression is less abundant between the lateral margins of the outer root sheath basal cells (at protein level). Expressed in epidermis. Expressed in the epithelium of the tongue.

It is found in the cell membrane. The protein resides in the cell junction. It localises to the desmosome. The protein localises to the cytoplasm. Its subcellular location is the tight junction. In terms of biological role, a component of desmosome cell-cell junctions which are required for positive regulation of cellular adhesion. Required for adherens and desmosome junction assembly in response to mechanical force in keratinocytes. Required for desmosome-mediated cell-cell adhesion of cells surrounding the telogen hair club and the basal layer of the outer root sheath epithelium, consequently is essential for the anchoring of telogen hairs in the hair follicle. Required for the maintenance of the epithelial barrier via promoting desmosome-mediated intercellular attachment of suprabasal epithelium to basal cells. May play a role in the protein stability of the desmosome plaque components DSP, JUP, PKP1, PKP2 and PKP3. Required for YAP1 localization at the plasma membrane in keratinocytes in response to mechanical strain, via the formation of an interaction complex composed of DSG3, PKP1 and YWHAG. May also be involved in the positive regulation of YAP1 target gene transcription and as a result cell proliferation. Positively regulates cellular contractility and cell junction formation via organization of cortical F-actin bundles and anchoring of actin to tight junctions, in conjunction with RAC1. The cytoplasmic pool of DSG3 is required for the localization of CDH1 and CTNNB1 at developing adherens junctions, potentially via modulation of SRC activity. Inhibits keratinocyte migration via suppression of p38MAPK signaling, may therefore play a role in moderating wound healing. The polypeptide is Desmoglein-3 (Dsg3) (Mus musculus (Mouse)).